Here is a 35-residue protein sequence, read N- to C-terminus: Photosystem II reaction center protein T (35 aa).

A helical membrane pass occupies residues 3 to 23 (SVAYILIFTLCIGTIFFAIAF).

It belongs to the PsbT family. In terms of assembly, PSII is composed of 1 copy each of membrane proteins PsbA, PsbB, PsbC, PsbD, PsbE, PsbF, PsbH, PsbI, PsbJ, PsbK, PsbL, PsbM, PsbT, PsbX, PsbY, PsbZ, Psb30/Ycf12, peripheral proteins PsbO, CyanoQ (PsbQ), PsbU, PsbV and a large number of cofactors. It forms dimeric complexes.

Its subcellular location is the cellular thylakoid membrane. Found at the monomer-monomer interface of the photosystem II (PS II) dimer, plays a role in assembly and dimerization of PSII. PSII is a light-driven water plastoquinone oxidoreductase, using light energy to abstract electrons from H(2)O, generating a proton gradient subsequently used for ATP formation. In Nostoc punctiforme (strain ATCC 29133 / PCC 73102), this protein is Photosystem II reaction center protein T.